The sequence spans 701 residues: Phytyl ester synthase 2, chloroplastic (701 aa).

A chloroplast-targeting transit peptide spans 1-65 (MAVTVLPSVS…KNNDENRATV (65 aa)). Residues 37 to 64 (SVTSTSSPPTPSSGVQRRRKNNDENRAT) form a disordered region.

It belongs to the diacylglycerol acyltransferase family.

Its subcellular location is the plastid. The protein localises to the chloroplast. The protein resides in the plastoglobule. The catalysed reaction is a 1,2-diacyl-3-O-(beta-D-galactosyl)-sn-glycerol + a 1,2-diacylglycerol = an acyl-3-O-(beta-D-galactosyl)-sn-glycerol + a triacylglycerol. The enzyme catalyses a 1,2-diacylglycerol + a fatty acyl-CoA = a triacylglycerol + CoA. It carries out the reaction a fatty acyl-[ACP] + a 1,2-diacylglycerol = a triacylglycerol + holo-[ACP]. It catalyses the reaction phytol + a fatty acyl-CoA = a fatty acid phytyl ester + CoA. The catalysed reaction is phytol + tetradecanoyl-CoA = tetradecanoate phytyl ester + CoA. The enzyme catalyses a 1,3-diacylglycerol + a fatty acyl-CoA = a triacylglycerol + CoA. It carries out the reaction 1,2-dihexanoylglycerol + tetradecanoyl-CoA = 1,2-dihexanoyl-3-tetradecanoylglycerol + CoA. It catalyses the reaction 1,2-dihexanoylglycerol + hexadecanoyl-CoA = 1,2-dihexanoyl-3-hexadecanoylglycerol + CoA. The catalysed reaction is 1,2-dihexanoylglycerol + octadecanoyl-CoA = 1,2-dihexanoyl-3-octadecanoylglycerol + CoA. The enzyme catalyses (7Z,10Z,13Z)-hexadecatrienoyl-CoA + 1,2-dihexanoylglycerol = 1,2-dihexanoyl-3-(7Z,10Z,13Z-hexadecatrienoyl)-glycerol + CoA. It carries out the reaction 1,2-dihexanoylglycerol + (9Z)-octadecenoyl-CoA = 1,2-dihexanoyl-3-(9Z-octadecenoyl)-glycerol + CoA. It catalyses the reaction 1,2-dihexanoylglycerol + (9Z,12Z,15Z)-octadecatrienoyl-CoA = 1,2-dihexanoyl-3-(9Z,12Z,15Z-octadecatrienoyl)-glycerol + CoA. The catalysed reaction is phytol + decanoyl-CoA = decanoate phytyl ester + CoA. The enzyme catalyses (7Z,10Z,13Z)-hexadecatrienoyl-CoA + phytol = (7Z,10Z,13Z)-hexadecatrienoate phytyl ester + CoA. It carries out the reaction phytol + dodecanoyl-CoA = dodecanoate phytyl ester + CoA. Acyltransferase involved in fatty acid phytyl ester synthesis in chloroplasts, a process required for the maintenance of the photosynthetic membrane integrity during abiotic stress and senescence. Exhibits phytyl ester synthesis and diacylglycerol acyltransferase activities with broad substrate specificities, and can employ acyl-CoAs, acyl carrier proteins, and galactolipids as acyl donors. This is Phytyl ester synthase 2, chloroplastic from Arabidopsis thaliana (Mouse-ear cress).